The following is a 181-amino-acid chain: Transcription termination/antitermination protein NusG (181 aa).

Residues 130-161 (PGEMIRVNDGPFADFNGVVEEVDYEKSRLKVS) form the KOW domain.

The protein belongs to the NusG family. Monomer. Interacts with the transcription termination factor Rho and with RNA polymerase.

Functionally, participates in transcription elongation, termination and antitermination. In the absence of Rho, increases the rate of transcription elongation by the RNA polymerase (RNAP), probably by partially suppressing pausing. In the presence of Rho, modulates most Rho-dependent termination events by interacting with the RNAP to render the complex more susceptible to the termination activity of Rho. May be required to overcome a kinetic limitation of Rho to function at certain terminators. Also involved in ribosomal RNA transcriptional antitermination. This is Transcription termination/antitermination protein NusG from Buchnera aphidicola subsp. Acyrthosiphon pisum (strain APS) (Acyrthosiphon pisum symbiotic bacterium).